Consider the following 508-residue polypeptide: ADP-ribosylarginine hydrolase CG3568 (508 aa).

The ADP-D-ribose site is built by Arg-209, Gly-349, Gly-351, Gly-353, Val-354, Trp-355, Trp-390, Asp-441, Asn-448, Glu-449, Gly-459, and Asp-460.

The enzyme catalyses N(omega)-(ADP-D-ribosyl)-L-arginyl-[protein] + H2O = ADP-D-ribose + L-arginyl-[protein]. It catalyses the reaction N(omega)-(ADP-D-ribosyl)-L-arginine + H2O = ADP-D-ribose + L-arginine. Functionally, protein ADP-ribosyl hydrolase that specifically removes mono-ADP-ribosyl modifications from protein arginine residues. This Drosophila melanogaster (Fruit fly) protein is ADP-ribosylarginine hydrolase CG3568.